The primary structure comprises 313 residues: Ribosomal protein L11 methyltransferase (313 aa).

Positions 151, 172, 194, and 245 each coordinate S-adenosyl-L-methionine.

Belongs to the methyltransferase superfamily. PrmA family.

The protein localises to the cytoplasm. The enzyme catalyses L-lysyl-[protein] + 3 S-adenosyl-L-methionine = N(6),N(6),N(6)-trimethyl-L-lysyl-[protein] + 3 S-adenosyl-L-homocysteine + 3 H(+). Functionally, methylates ribosomal protein L11. This is Ribosomal protein L11 methyltransferase from Nitrosomonas europaea (strain ATCC 19718 / CIP 103999 / KCTC 2705 / NBRC 14298).